We begin with the raw amino-acid sequence, 79 residues long: RNA-binding protein KhpA (79 aa).

Positions 30–79 constitute a KH domain; sequence GRVLEVRVHPDDLGKVIGRNGRTARALRTVVGAIGGRGVRVDLVDVDHVR.

It belongs to the KhpA RNA-binding protein family.

The protein localises to the cytoplasm. It is found in the nucleoid. Its function is as follows. A probable RNA-binding protein. The protein is RNA-binding protein KhpA of Streptomyces coelicolor (strain ATCC BAA-471 / A3(2) / M145).